Consider the following 264-residue polypeptide: Thymidylate synthase (264 aa).

Arginine 21 lines the dUMP pocket. Histidine 51 serves as a coordination point for (6R)-5,10-methylene-5,6,7,8-tetrahydrofolate. DUMP is bound at residue 126–127 (RR). Cysteine 146 acts as the Nucleophile in catalysis. DUMP-binding positions include 166–169 (RSAD), asparagine 177, and 207–209 (HLY). Aspartate 169 lines the (6R)-5,10-methylene-5,6,7,8-tetrahydrofolate pocket. Alanine 263 is a (6R)-5,10-methylene-5,6,7,8-tetrahydrofolate binding site.

This sequence belongs to the thymidylate synthase family. Bacterial-type ThyA subfamily. In terms of assembly, homodimer.

Its subcellular location is the cytoplasm. It catalyses the reaction dUMP + (6R)-5,10-methylene-5,6,7,8-tetrahydrofolate = 7,8-dihydrofolate + dTMP. It participates in pyrimidine metabolism; dTTP biosynthesis. Catalyzes the reductive methylation of 2'-deoxyuridine-5'-monophosphate (dUMP) to 2'-deoxythymidine-5'-monophosphate (dTMP) while utilizing 5,10-methylenetetrahydrofolate (mTHF) as the methyl donor and reductant in the reaction, yielding dihydrofolate (DHF) as a by-product. This enzymatic reaction provides an intracellular de novo source of dTMP, an essential precursor for DNA biosynthesis. This Nitrosomonas eutropha (strain DSM 101675 / C91 / Nm57) protein is Thymidylate synthase.